A 249-amino-acid chain; its full sequence is Putative adhesin RC1281 (249 aa).

Residues 1–22 (MKKLLLIAAASTALLTSGLSFA) form the signal peptide.

Its function is as follows. Adheres to biotinylated epithelial (Vero cell) proteins. This is Putative adhesin RC1281 from Rickettsia conorii (strain ATCC VR-613 / Malish 7).